The primary structure comprises 100 residues: NADH-quinone oxidoreductase subunit K (100 aa).

3 helical membrane passes run 2 to 22 (IGLS…LMGV), 29 to 49 (LMLF…FAAI), and 63 to 83 (FFII…LIVL).

It belongs to the complex I subunit 4L family. In terms of assembly, NDH-1 is composed of 14 different subunits. Subunits NuoA, H, J, K, L, M, N constitute the membrane sector of the complex.

It is found in the cell inner membrane. The enzyme catalyses a quinone + NADH + 5 H(+)(in) = a quinol + NAD(+) + 4 H(+)(out). NDH-1 shuttles electrons from NADH, via FMN and iron-sulfur (Fe-S) centers, to quinones in the respiratory chain. The immediate electron acceptor for the enzyme in this species is believed to be ubiquinone. Couples the redox reaction to proton translocation (for every two electrons transferred, four hydrogen ions are translocated across the cytoplasmic membrane), and thus conserves the redox energy in a proton gradient. The polypeptide is NADH-quinone oxidoreductase subunit K (Sulfurovum sp. (strain NBC37-1)).